The following is a 437-amino-acid chain: Trigger factor (437 aa).

The PPIase FKBP-type domain occupies glycine 164–glycine 249.

Belongs to the FKBP-type PPIase family. Tig subfamily.

The protein resides in the cytoplasm. It catalyses the reaction [protein]-peptidylproline (omega=180) = [protein]-peptidylproline (omega=0). Its function is as follows. Involved in protein export. Acts as a chaperone by maintaining the newly synthesized protein in an open conformation. Functions as a peptidyl-prolyl cis-trans isomerase. This is Trigger factor from Campylobacter hominis (strain ATCC BAA-381 / DSM 21671 / CCUG 45161 / LMG 19568 / NCTC 13146 / CH001A).